The chain runs to 522 residues: Protein nucleotidyltransferase YdiU (522 aa).

ATP-binding residues include G109, G111, R112, K132, D144, G145, R195, and R202. The active-site Proton acceptor is D271. Positions 272 and 281 each coordinate Mg(2+). D281 contacts ATP.

Belongs to the SELO family. Requires Mg(2+) as cofactor. Mn(2+) is required as a cofactor.

The enzyme catalyses L-seryl-[protein] + ATP = 3-O-(5'-adenylyl)-L-seryl-[protein] + diphosphate. The catalysed reaction is L-threonyl-[protein] + ATP = 3-O-(5'-adenylyl)-L-threonyl-[protein] + diphosphate. It catalyses the reaction L-tyrosyl-[protein] + ATP = O-(5'-adenylyl)-L-tyrosyl-[protein] + diphosphate. It carries out the reaction L-histidyl-[protein] + UTP = N(tele)-(5'-uridylyl)-L-histidyl-[protein] + diphosphate. The enzyme catalyses L-seryl-[protein] + UTP = O-(5'-uridylyl)-L-seryl-[protein] + diphosphate. The catalysed reaction is L-tyrosyl-[protein] + UTP = O-(5'-uridylyl)-L-tyrosyl-[protein] + diphosphate. Functionally, nucleotidyltransferase involved in the post-translational modification of proteins. It can catalyze the addition of adenosine monophosphate (AMP) or uridine monophosphate (UMP) to a protein, resulting in modifications known as AMPylation and UMPylation. The chain is Protein nucleotidyltransferase YdiU from Burkholderia lata (strain ATCC 17760 / DSM 23089 / LMG 22485 / NCIMB 9086 / R18194 / 383).